We begin with the raw amino-acid sequence, 159 residues long: Ribosomal RNA large subunit methyltransferase H (159 aa).

Residues leucine 76, glycine 108, and 127–132 (FSKMTF) contribute to the S-adenosyl-L-methionine site.

The protein belongs to the RNA methyltransferase RlmH family. As to quaternary structure, homodimer.

The protein resides in the cytoplasm. The enzyme catalyses pseudouridine(1915) in 23S rRNA + S-adenosyl-L-methionine = N(3)-methylpseudouridine(1915) in 23S rRNA + S-adenosyl-L-homocysteine + H(+). Functionally, specifically methylates the pseudouridine at position 1915 (m3Psi1915) in 23S rRNA. The polypeptide is Ribosomal RNA large subunit methyltransferase H (Clostridium botulinum (strain ATCC 19397 / Type A)).